Here is a 294-residue protein sequence, read N- to C-terminus: Putative inactive magnesium transporter MRS2-8 (294 aa).

A coiled-coil region spans residues 179 to 216 (KLKSSMTRLTAQVQKIKDELEQLLEDDEDMAELYLSRK).

It belongs to the CorA metal ion transporter (MIT) (TC 1.A.35.5) family.

This is Putative inactive magnesium transporter MRS2-8 (MRS2-8) from Arabidopsis thaliana (Mouse-ear cress).